A 156-amino-acid chain; its full sequence is 6,7-dimethyl-8-ribityllumazine synthase (156 aa).

5-amino-6-(D-ribitylamino)uracil is bound by residues Phe22, 57–59 (AYE), and 81–83 (TVI). 86–87 (GT) contributes to the (2S)-2-hydroxy-3-oxobutyl phosphate binding site. His89 serves as the catalytic Proton donor. Residue Phe114 participates in 5-amino-6-(D-ribitylamino)uracil binding. Arg128 contacts (2S)-2-hydroxy-3-oxobutyl phosphate.

Belongs to the DMRL synthase family. Forms an icosahedral capsid composed of 60 subunits, arranged as a dodecamer of pentamers.

The catalysed reaction is (2S)-2-hydroxy-3-oxobutyl phosphate + 5-amino-6-(D-ribitylamino)uracil = 6,7-dimethyl-8-(1-D-ribityl)lumazine + phosphate + 2 H2O + H(+). It participates in cofactor biosynthesis; riboflavin biosynthesis; riboflavin from 2-hydroxy-3-oxobutyl phosphate and 5-amino-6-(D-ribitylamino)uracil: step 1/2. Catalyzes the formation of 6,7-dimethyl-8-ribityllumazine by condensation of 5-amino-6-(D-ribitylamino)uracil with 3,4-dihydroxy-2-butanone 4-phosphate. This is the penultimate step in the biosynthesis of riboflavin. This Salmonella agona (strain SL483) protein is 6,7-dimethyl-8-ribityllumazine synthase.